The primary structure comprises 492 residues: KRAB-A domain-containing protein 2 (492 aa).

Residues 36-117 (LFQEATAFEN…MREKFLMSVT (82 aa)) form the KRAB domain. Phosphoserine is present on S115. T117 carries the post-translational modification Phosphothreonine. The Integrase catalytic domain occupies 247-415 (RGLAPKPMTF…SPFEAMFGYK (169 aa)). Residues 427–457 (RETVATLQTEEELEIAEEQLENSLWIRQEER) are a coiled coil. The segment covering 455–465 (EERAEIGADRS) has biased composition (basic and acidic residues). The tract at residues 455–492 (EERAEIGADRSDMDDDMDPTPEASEPSTSQGTSGLLCW) is disordered. The segment covering 479–492 (EPSTSQGTSGLLCW) has biased composition (polar residues).

This Homo sapiens (Human) protein is KRAB-A domain-containing protein 2 (KRBA2).